The following is a 398-amino-acid chain: MTQTIPSPNPWSISRPTALLILADGTVIEGKGAGATGVAEGEICFNTAMTGYEEILTDPSYKKQIINFTFPHIGNVGTNSEDIEDLTPLNCHGAVGAIFKADITYPSNYRANENLNQWLKTRKIIALCGVDTRALTVLIREKGSLNGIIIHDPNGNFDIHALKKHAQKWTGLINLDLAKEVTSKQFVEWNEKPWVWNKGYSTNDACNFHIVAIDYGIKRNILRLMAAHGARITIVPANTNVEKILAMNPDGVFLSNGPGDPTATANYAVPTIQALIDSNIPLFGICLGHQLLALAVGAKTIKMHQGHHGANHPVKDFITRKVEIASMNHGFAVETTSLPEHVEETHISLFDNSNCGLRIIGKPVFSVQHHPEASPGPQDSHYLFQRFFNLIMDYKRTA.

2 CPSase regions span residues 1-205 (MTQT…TNDA) and 1-207 (MTQT…DACN). The L-glutamine site is built by Ser-60, Gly-257, and Gly-259. The Glutamine amidotransferase type-1 domain maps to 209–397 (HIVAIDYGIK…FNLIMDYKRT (189 aa)). The Nucleophile role is filled by Cys-286. Residues Leu-287, Gln-290, Asn-328, Gly-330, and Phe-331 each coordinate L-glutamine. Catalysis depends on residues His-370 and Glu-372.

This sequence belongs to the CarA family. Composed of two chains; the small (or glutamine) chain promotes the hydrolysis of glutamine to ammonia, which is used by the large (or ammonia) chain to synthesize carbamoyl phosphate. Tetramer of heterodimers (alpha,beta)4.

It catalyses the reaction hydrogencarbonate + L-glutamine + 2 ATP + H2O = carbamoyl phosphate + L-glutamate + 2 ADP + phosphate + 2 H(+). The catalysed reaction is L-glutamine + H2O = L-glutamate + NH4(+). Its pathway is amino-acid biosynthesis; L-arginine biosynthesis; carbamoyl phosphate from bicarbonate: step 1/1. It participates in pyrimidine metabolism; UMP biosynthesis via de novo pathway; (S)-dihydroorotate from bicarbonate: step 1/3. In terms of biological role, small subunit of the glutamine-dependent carbamoyl phosphate synthetase (CPSase). CPSase catalyzes the formation of carbamoyl phosphate from the ammonia moiety of glutamine, carbonate, and phosphate donated by ATP, constituting the first step of 2 biosynthetic pathways, one leading to arginine and/or urea and the other to pyrimidine nucleotides. The small subunit (glutamine amidotransferase) binds and cleaves glutamine to supply the large subunit with the substrate ammonia. This is Carbamoyl phosphate synthase small chain from Bartonella quintana (strain Toulouse) (Rochalimaea quintana).